We begin with the raw amino-acid sequence, 210 residues long: Isomeliandiol synthase ISM1 (210 aa).

A run of 5 helical transmembrane segments spans residues 17–37, 50–70, 107–127, 135–155, and 172–192; these read FTLH…TWFI, LLCW…YFVF, IEGM…YAIV, ILQF…FLTA, and YYVG…INFW. Residues 46–188 enclose the EXPERA domain; it reads GDRLLLCWWA…IWIIVPSLIA (143 aa).

Belongs to the EBP family.

It is found in the membrane. It carries out the reaction 7,8-epoxymelianol = isomeliandiol. It functions in the pathway secondary metabolite biosynthesis; terpenoid biosynthesis. Isomerase involved in the biosynthesis of limonoids and quassinoids triterpene natural products such as ailanthone, chaparrinone, glaucarubinone and amarolide, allelopathic degraded triterpene lactones inhibiting the growth of other plants, and possessing antimalarial, antifeedant, insecticidal, anti-inflammatory and anticancer activities. Catalyzes the conversion of 7,8-epoxymelianol to isomeliandiol via skeletal rearrangements. This Ailanthus altissima (Tree-of-heaven) protein is Isomeliandiol synthase ISM1.